The sequence spans 3625 residues: Spectinabilin polyketide synthase system protein NorA' (3625 aa).

In terms of domain architecture, Ketosynthase family 3 (KS3) 1 spans arginine 33–glutamine 459. Catalysis depends on for beta-ketoacyl synthase 1 activity residues cysteine 206, histidine 341, and histidine 381. The region spanning leucine 564 to arginine 881 is the Malonyl-CoA:ACP transacylase (MAT) 1 domain. Residues histidine 930 to alanine 1054 are N-terminal hotdog fold 1. In terms of domain architecture, PKS/mFAS DH 1 spans histidine 930–alanine 1200. Histidine 962 serves as the catalytic Proton acceptor; for dehydratase activity 1. Residues alanine 1066–alanine 1200 are C-terminal hotdog fold 1. Aspartate 1125 (proton donor; for dehydratase activity 1) is an active-site residue. The 178-residue stretch at glycine 1443–glutamate 1620 folds into the Ketoreductase (KR) 1 domain. The region spanning glycine 1722–leucine 1797 is the Carrier 1 domain. Position 1757 is an O-(pantetheine 4'-phosphoryl)serine (serine 1757). One can recognise a Ketosynthase family 3 (KS3) 2 domain in the interval aspartate 1815–glutamine 2231. Active-site for beta-ketoacyl synthase 2 activity residues include cysteine 1978, histidine 2113, and histidine 2153. One can recognise a Malonyl-CoA:ACP transacylase (MAT) 2 domain in the interval valine 2336–alanine 2656. Residues histidine 2704–threonine 2829 are N-terminal hotdog fold 2. The PKS/mFAS DH 2 domain occupies histidine 2704–arginine 2981. Histidine 2736 functions as the Proton acceptor; for dehydratase activity 2 in the catalytic mechanism. Positions alanine 2842–arginine 2981 are C-terminal hotdog fold 2. Catalysis depends on aspartate 2903, which acts as the Proton donor; for dehydratase activity 2. The 180-residue stretch at glycine 3182–glutamate 3361 folds into the Ketoreductase (KR) 2 domain. The 76-residue stretch at arginine 3462–leucine 3537 folds into the Carrier 2 domain. Serine 3497 carries the post-translational modification O-(pantetheine 4'-phosphoryl)serine.

As to quaternary structure, the spectinabilin polyketide synthase complex is composed of 4 proteins, NorA, NorA', NorB and NorC. The complex comprises 6 modules with a total of 28 catalytic domains catalyzing 7 chain elongations. NorA comprises one module, NorA' two modules, NorB one module and NorC two modules. Requires pantetheine 4'-phosphate as cofactor.

The catalysed reaction is 4-nitrobenzoyl-CoA + 6 (S)-methylmalonyl-CoA + malonyl-CoA + 6 NADPH + 12 H(+) = demethyldeoxyspectinabilin + 7 CO2 + 6 NADP(+) + 8 CoA + 5 H2O. It participates in antibiotic biosynthesis. It functions in the pathway polyketide biosynthesis. Component of a type I modular polyketide synthase (PKS) that generates the backbone of the antibiotic spectinabilin (also known as neoaureothin), a nitroaryl-substituted polyketide metabolite. This PKS system accepts the unusual starter unit 4-nitrobenzoyl-CoA and extends it by 6 molecules of (S)-methylmalonyl-CoA and a single molecule of malonyl-CoA. The chain is Spectinabilin polyketide synthase system protein NorA' from Streptomyces orinoci (Streptoverticillium orinoci).